Reading from the N-terminus, the 356-residue chain is Sulfate/thiosulfate import ATP-binding protein CysA (356 aa).

One can recognise an ABC transporter domain in the interval 3–237 (IEVKNLVKRF…PKNSFVFHFL (235 aa)). 35-42 (GPSGSGKT) lines the ATP pocket.

Belongs to the ABC transporter superfamily. Sulfate/tungstate importer (TC 3.A.1.6) family. In terms of assembly, the complex is composed of two ATP-binding proteins (CysA), two transmembrane proteins (CysT and CysW) and a solute-binding protein (CysP).

The protein localises to the cell inner membrane. It catalyses the reaction sulfate(out) + ATP + H2O = sulfate(in) + ADP + phosphate + H(+). The catalysed reaction is thiosulfate(out) + ATP + H2O = thiosulfate(in) + ADP + phosphate + H(+). Functionally, part of the ABC transporter complex CysAWTP involved in sulfate/thiosulfate import. Responsible for energy coupling to the transport system. The sequence is that of Sulfate/thiosulfate import ATP-binding protein CysA from Leptospira interrogans serogroup Icterohaemorrhagiae serovar copenhageni (strain Fiocruz L1-130).